The following is a 433-amino-acid chain: Enolase (433 aa).

Glutamine 167 serves as a coordination point for (2R)-2-phosphoglycerate. The active-site Proton donor is the glutamate 209. Mg(2+) contacts are provided by aspartate 246, glutamate 291, and aspartate 318. Lysine 343, arginine 372, serine 373, and lysine 394 together coordinate (2R)-2-phosphoglycerate. Lysine 343 functions as the Proton acceptor in the catalytic mechanism.

The protein belongs to the enolase family. In terms of assembly, component of the RNA degradosome, a multiprotein complex involved in RNA processing and mRNA degradation. It depends on Mg(2+) as a cofactor.

It localises to the cytoplasm. The protein localises to the secreted. It is found in the cell surface. The enzyme catalyses (2R)-2-phosphoglycerate = phosphoenolpyruvate + H2O. It functions in the pathway carbohydrate degradation; glycolysis; pyruvate from D-glyceraldehyde 3-phosphate: step 4/5. Its function is as follows. Catalyzes the reversible conversion of 2-phosphoglycerate (2-PG) into phosphoenolpyruvate (PEP). It is essential for the degradation of carbohydrates via glycolysis. This is Enolase from Hamiltonella defensa subsp. Acyrthosiphon pisum (strain 5AT).